Consider the following 526-residue polypeptide: MDKNIHEQRILILDFGSQYTQLIARRIREIGVYCELWSWDVDEQDIKDFAPNGIILAGGPESVTAEGSPRAPEYVFTAGVPVLGICYGMQTMSEQLGGSVIKGEGEGEFGYAQIEVKGASELFKLIEDAVAQNGNALLDVWMSHGDKVSAIPAGFTTIANTATCQFAAIANEEKRFYGVQFHPEVTHTRQGERMLRHFVMDICGCETLWTSSSIIEDAVARMKAQIGDDEVILGLSGGVDSSVVAMLLQRAIGDKLTCVFVDNGLLRLNEGQQVMDMFGDHFGLKIIHVNAEHRFLEQMAGESDPEAKRKIIGRVFVEIFDEESKKLKNAKWLAQGTIYPDVIESAGSKTGKAQVIKSHHNVGGLPDDMEMGLVEPLRELFKDEVRKIGLELGLPYEMLYRHPFPGPGLGVRVLGEVKKEYCDLLRRADAIFIEELHKADLYHKVSQAFVVFLPVRSVGVMGDCRKYDWVVSLRCVETIDFMTARWSHLPYDLIGHVSNRIINEIDGISRVVYDVSGKPPATIEWE.

The 200-residue stretch at 9–208 folds into the Glutamine amidotransferase type-1 domain; the sequence is RILILDFGSQ…VMDICGCETL (200 aa). The Nucleophile role is filled by Cys-86. Active-site residues include His-182 and Glu-184. The GMPS ATP-PPase domain maps to 209 to 401; the sequence is WTSSSIIEDA…LGLPYEMLYR (193 aa). 236-242 provides a ligand contact to ATP; sequence SGGVDSS.

Homodimer.

The enzyme catalyses XMP + L-glutamine + ATP + H2O = GMP + L-glutamate + AMP + diphosphate + 2 H(+). The protein operates within purine metabolism; GMP biosynthesis; GMP from XMP (L-Gln route): step 1/1. Its function is as follows. Catalyzes the synthesis of GMP from XMP. The sequence is that of GMP synthase [glutamine-hydrolyzing] from Psychromonas ingrahamii (strain DSM 17664 / CCUG 51855 / 37).